The following is a 145-amino-acid chain: Maximins 5/H4 type 1 (145 aa).

An N-terminal signal peptide occupies residues 1–18 (MNFKYIVAVSFLIASAYA). 2 propeptides span residues 19 to 43 (RSVQNDEQSLSQRDVLEEESLREIR) and 74 to 124 (TAEE…KEKR). Leu-144 bears the Leucine amide mark.

This sequence belongs to the bombinin family. Expressed by the skin glands.

The protein resides in the secreted. In terms of biological role, maximin-5 shows antibacterial activity against both Gram-positive and Gram-negative bacteria. The only exception is the resistance of E.coli. Also shows antimicrobial activity against fungi C.albicans, A.flavus and P.uticale. It has little hemolytic activity. It does not possess a significant cytotoxicity against tumor cell lines. It does not possess a significant anti-HIV activity. Functionally, maximin-H4 shows antibacterial activity against both Gram-positive and Gram-negative bacteria. It also shows antimicrobial activity against the fungus C.albicans. Shows strong hemolytic activity. The chain is Maximins 5/H4 type 1 from Bombina maxima (Giant fire-bellied toad).